The chain runs to 466 residues: Uronate isomerase (466 aa).

The protein belongs to the metallo-dependent hydrolases superfamily. Uronate isomerase family.

The enzyme catalyses D-glucuronate = D-fructuronate. The catalysed reaction is aldehydo-D-galacturonate = keto-D-tagaturonate. It participates in carbohydrate metabolism; pentose and glucuronate interconversion. The protein is Uronate isomerase of Brucella suis (strain ATCC 23445 / NCTC 10510).